The chain runs to 318 residues: Receptor homology region, transmembrane domain- and RING domain-containing protein 5 (318 aa).

The signal sequence occupies residues M1–A20. Over V22–S163 the chain is Lumenal. The cysteines at positions 62 and 87 are disulfide-linked. Positions E70–Y143 constitute a PA domain. A glycan (N-linked (GlcNAc...) asparagine) is linked at N121. A helical transmembrane segment spans residues I164–V184. At V185–L318 the chain is on the cytoplasmic side. The RING-type; atypical zinc finger occupies C233–K275.

Its subcellular location is the prevacuolar compartment membrane. It localises to the protein storage vacuole membrane. In terms of biological role, involved in the trafficking of vacuolar proteins. May function as a sorting receptor for protein trafficking to the protein storage vacuole (PSV). This Arabidopsis thaliana (Mouse-ear cress) protein is Receptor homology region, transmembrane domain- and RING domain-containing protein 5 (RMR5).